A 239-amino-acid chain; its full sequence is Ribonuclease PH (239 aa).

Phosphate-binding positions include arginine 88 and 126-128; that span reads GTR.

It belongs to the RNase PH family. Homohexameric ring arranged as a trimer of dimers.

The enzyme catalyses tRNA(n+1) + phosphate = tRNA(n) + a ribonucleoside 5'-diphosphate. Its function is as follows. Phosphorolytic 3'-5' exoribonuclease that plays an important role in tRNA 3'-end maturation. Removes nucleotide residues following the 3'-CCA terminus of tRNAs; can also add nucleotides to the ends of RNA molecules by using nucleoside diphosphates as substrates, but this may not be physiologically important. Probably plays a role in initiation of 16S rRNA degradation (leading to ribosome degradation) during starvation. The chain is Ribonuclease PH from Coxiella burnetii (strain Dugway 5J108-111).